Reading from the N-terminus, the 249-residue chain is uncharacterized protein (249 aa).

2 consecutive transmembrane segments (helical) span residues 49–69 (ILLS…CYLL) and 223–243 (IVMS…VHHL).

Its subcellular location is the cell membrane. This is an uncharacterized protein from Bacillus anthracis.